A 253-amino-acid polypeptide reads, in one-letter code: Chitooligosaccharide deacetylase (253 aa).

Mg(2+) contacts are provided by H61 and H126.

This sequence belongs to the YdjC deacetylase family. ChbG subfamily. In terms of assembly, homodimer. It depends on Mg(2+) as a cofactor.

It localises to the cytoplasm. The catalysed reaction is N,N'-diacetylchitobiose + H2O = N-acetyl-beta-D-glucosaminyl-(1-&gt;4)-D-glucosamine + acetate. It carries out the reaction diacetylchitobiose-6'-phosphate + H2O = N'-monoacetylchitobiose-6'-phosphate + acetate. It participates in glycan degradation; chitin degradation. Functionally, involved in the degradation of chitin. ChbG is essential for growth on the acetylated chitooligosaccharides chitobiose and chitotriose but is dispensable for growth on cellobiose and chitosan dimer, the deacetylated form of chitobiose. Deacetylation of chitobiose-6-P and chitotriose-6-P is necessary for both the activation of the chb promoter by the regulatory protein ChbR and the hydrolysis of phosphorylated beta-glucosides by the phospho-beta-glucosidase ChbF. Catalyzes the removal of only one acetyl group from chitobiose-6-P to yield monoacetylchitobiose-6-P, the inducer of ChbR and the substrate of ChbF. In Yersinia enterocolitica serotype O:8 / biotype 1B (strain NCTC 13174 / 8081), this protein is Chitooligosaccharide deacetylase.